The sequence spans 257 residues: MGEQVLDFRGLFDERGNPITKRKKAVEQVEEVVTPEEKTKVVTVEKPVYIPVEKRKLKRKITFAPEDSLSTDDVFAPRVYYDYNFSPFDFLSRSRTFAPRMSYDYEYAPEDFSSYSEVYSPSESYDDTFAPKYRNFRKSVYSPSTVIKNKFAPKVTQRIKFKPRLFDKLLAIFAPESILKTKENVKYKPYNYQYQETAIIDTYNPEQITTVEKFSPKDESNFNLRIAPETDFSIKLSPPPISFTSVDYYGILKKIIR.

This is an uncharacterized protein from Acidianus bottle-shaped virus (isolate Italy/Pozzuoli) (ABV).